The sequence spans 401 residues: MVKFDSGSESEMTNGDDLHINSKHEVKSRMANGNGVHNVPDHDQFQDRAEMEVLILPDLFSSLMSVPARENPHYASVKADADEWISSVINADAKWASRNKRVDFTYLASIWAPDCSAFALRTSADWNSWAFLFDDQFDEGHLSNDLDGAINEIARTREIMEGTAPRYTADSEHPIRYVFQTLCDRVKQSPEGFYAGKPSSERFYRRWMWAHELYWEGLVAQVRTNVEGRSFTRGPEEYLAMRRGSLGAYPALVNNEWAYGIDLPEEVADHPLVFEIMVIMSDQILLVNDILSYEKDLRLGVDHNMVRLLKAKGLSTQQAINEVGVMINNCYRRYYRALSELPCFGEEADRALLGYLEVEKNHALGSLLWSYKTGRYFKSKEDGARVRKTRELLIPKKMAAL.

The interval 1–21 is disordered; it reads MVKFDSGSESEMTNGDDLHIN. Aspartate 134 and glutamate 139 together coordinate Mg(2+). The DDXXD motif motif lies at 134-138; the sequence is DDQFD. Arginine 242 is a substrate binding site. Positions 288 and 292 each coordinate Mg(2+). Lysine 295 is a binding site for substrate. Aspartate 296 lines the Mg(2+) pocket. 375-376 provides a ligand contact to substrate; sequence RY.

The protein belongs to the terpene synthase family. The cofactor is Mg(2+).

It catalyses the reaction (2E,6E)-farnesyl diphosphate = (1R,4R,5S)-(-)-guaia-6,10(14)-diene + diphosphate. The protein operates within secondary metabolite biosynthesis; terpenoid biosynthesis. Functionally, catalyzes the conversion of (2E,6E)-farnesyl diphosphate (FPP) to yield the bicyclic sesquiterpene guaia-6,10(14)-diene via a 1,10-cyclization, which requires the abstraction of the pyrophosphate from FPP to yield the (E,E)-germacradienyl cation. The only accepted substrate is farnesyl diphosphate (FPP). This chain is (1R,4R,5S)-(-)-guaia-6,10(14)-diene synthase, found in Fusarium proliferatum (strain ET1) (Orchid endophyte fungus).